Reading from the N-terminus, the 322-residue chain is Phosphatidylserine decarboxylase proenzyme (322 aa).

Residues D90, H147, and S254 each act as charge relay system; for autoendoproteolytic cleavage activity in the active site. S254 (schiff-base intermediate with substrate; via pyruvic acid; for decarboxylase activity) is an active-site residue. S254 carries the post-translational modification Pyruvic acid (Ser); by autocatalysis. The segment at 293-322 (PDAEPAPLPAEEIEAEHDASPLVDDKKDQV) is disordered. Positions 308 to 322 (EHDASPLVDDKKDQV) are enriched in basic and acidic residues.

This sequence belongs to the phosphatidylserine decarboxylase family. PSD-B subfamily. Prokaryotic type I sub-subfamily. As to quaternary structure, heterodimer of a large membrane-associated beta subunit and a small pyruvoyl-containing alpha subunit. The cofactor is pyruvate. In terms of processing, is synthesized initially as an inactive proenzyme. Formation of the active enzyme involves a self-maturation process in which the active site pyruvoyl group is generated from an internal serine residue via an autocatalytic post-translational modification. Two non-identical subunits are generated from the proenzyme in this reaction, and the pyruvate is formed at the N-terminus of the alpha chain, which is derived from the carboxyl end of the proenzyme. The autoendoproteolytic cleavage occurs by a canonical serine protease mechanism, in which the side chain hydroxyl group of the serine supplies its oxygen atom to form the C-terminus of the beta chain, while the remainder of the serine residue undergoes an oxidative deamination to produce ammonia and the pyruvoyl prosthetic group on the alpha chain. During this reaction, the Ser that is part of the protease active site of the proenzyme becomes the pyruvoyl prosthetic group, which constitutes an essential element of the active site of the mature decarboxylase.

The protein resides in the cell membrane. It catalyses the reaction a 1,2-diacyl-sn-glycero-3-phospho-L-serine + H(+) = a 1,2-diacyl-sn-glycero-3-phosphoethanolamine + CO2. It participates in phospholipid metabolism; phosphatidylethanolamine biosynthesis; phosphatidylethanolamine from CDP-diacylglycerol: step 2/2. Its function is as follows. Catalyzes the formation of phosphatidylethanolamine (PtdEtn) from phosphatidylserine (PtdSer). This chain is Phosphatidylserine decarboxylase proenzyme, found in Escherichia coli O45:K1 (strain S88 / ExPEC).